Consider the following 400-residue polypeptide: Nicotinate phosphoribosyltransferase (400 aa).

Residue histidine 220 is modified to Phosphohistidine; by autocatalysis.

Belongs to the NAPRTase family. Transiently phosphorylated on a His residue during the reaction cycle. Phosphorylation strongly increases the affinity for substrates and increases the rate of nicotinate D-ribonucleotide production. Dephosphorylation regenerates the low-affinity form of the enzyme, leading to product release.

The enzyme catalyses nicotinate + 5-phospho-alpha-D-ribose 1-diphosphate + ATP + H2O = nicotinate beta-D-ribonucleotide + ADP + phosphate + diphosphate. It functions in the pathway cofactor biosynthesis; NAD(+) biosynthesis; nicotinate D-ribonucleotide from nicotinate: step 1/1. Functionally, catalyzes the synthesis of beta-nicotinate D-ribonucleotide from nicotinate and 5-phospho-D-ribose 1-phosphate at the expense of ATP. The chain is Nicotinate phosphoribosyltransferase from Shigella sonnei (strain Ss046).